We begin with the raw amino-acid sequence, 682 residues long: Methionine--tRNA ligase (682 aa).

Positions 12-22 match the 'HIGH' region motif; sequence PYANGAIHLGH. Positions 143, 146, 156, and 159 each coordinate Zn(2+). Residues 328-332 carry the 'KMSKS' region motif; the sequence is KMSKS. Lys-331 contacts ATP. Residues 580–682 enclose the tRNA-binding domain; it reads DFAKLDLRVA…EGIRPGMQVK (103 aa).

The protein belongs to the class-I aminoacyl-tRNA synthetase family. MetG type 1 subfamily. Homodimer. Zn(2+) is required as a cofactor.

It localises to the cytoplasm. It carries out the reaction tRNA(Met) + L-methionine + ATP = L-methionyl-tRNA(Met) + AMP + diphosphate. Is required not only for elongation of protein synthesis but also for the initiation of all mRNA translation through initiator tRNA(fMet) aminoacylation. This is Methionine--tRNA ligase from Actinobacillus pleuropneumoniae serotype 7 (strain AP76).